A 471-amino-acid chain; its full sequence is Eremophilane O-acetyltransferase prx11 (471 aa).

This sequence belongs to the fumigaclavine B O-acetyltransferase family. Monomer.

It participates in sesquiterpene biosynthesis. In terms of biological role, O-acetyltransferase; part of the gene cluster that mediates the biosynthesis of PR-toxin, a bicyclic sesquiterpene belonging to the eremophilane class and acting as a mycotoxin. The first step of the pathway is catalyzed by the aristolochene synthase which performs the cyclization of trans,trans-farnesyl diphosphate (FPP) to the bicyclic sesquiterpene aristolochene. Following the formation of aristolochene, the non-oxygenated aristolochene is converted to the trioxygenated intermediate eremofortin B, via 7-epi-neopetasone. This conversion appears to involve three enzymes, a hydroxysterol oxidase-like enzyme, the quinone-oxidase prx3 that forms the quinone-type-structure in the bicyclic nucleus of aristolochene with the C8-oxo group and the C-3 hydroxyl group, and the P450 monooxygenase prx9 that introduces the epoxide at the double bond between carbons 1 and 2. No monoxy or dioxy-intermediates have been reported to be released to the broth, so these three early oxidative reactions may be coupled together. Eremofortin B is further oxidized by another P450 monooxygenase, that introduces a second epoxide between carbons 7 and 11 prior to acetylation to eremofortin A by the acetyltransferase prx11. The second epoxidation may be performed by a second P450 monooxygenase. After the acetylation step, eremofortin A is converted to eremofortin C and then to PR-toxin. First the conversion of eremofortin A to eremofortin C proceeds by oxidation of the side chain of the molecule at C-12 and is catalyzed by the short-chain oxidoreductase prx1. The cytochrome P450 monooxygenase prx8 also plays a role in this step. The primary alcohol formed at C-12 is finally oxidized by the short-chain alcohol dehydrogenase prx4 that forms PR-toxin. The polypeptide is Eremophilane O-acetyltransferase prx11 (Penicillium rubens (strain ATCC 28089 / DSM 1075 / NRRL 1951 / Wisconsin 54-1255) (Penicillium chrysogenum)).